Reading from the N-terminus, the 275-residue chain is Large ribosomal subunit protein uL2 (275 aa).

2 disordered regions span residues 24-47 (IHKGSPHASLLESQSKTGGRNHHG) and 227-261 (PVDHPHGGGEAKSGQGNPHPVTPWGVPTKGYKTRK).

It belongs to the universal ribosomal protein uL2 family. In terms of assembly, part of the 50S ribosomal subunit. Forms a bridge to the 30S subunit in the 70S ribosome.

Functionally, one of the primary rRNA binding proteins. Required for association of the 30S and 50S subunits to form the 70S ribosome, for tRNA binding and peptide bond formation. It has been suggested to have peptidyltransferase activity; this is somewhat controversial. Makes several contacts with the 16S rRNA in the 70S ribosome. The chain is Large ribosomal subunit protein uL2 from Xylella fastidiosa (strain M12).